The sequence spans 467 residues: Asparagine--tRNA ligase (467 aa).

The protein belongs to the class-II aminoacyl-tRNA synthetase family. As to quaternary structure, homodimer.

It localises to the cytoplasm. The catalysed reaction is tRNA(Asn) + L-asparagine + ATP = L-asparaginyl-tRNA(Asn) + AMP + diphosphate + H(+). This chain is Asparagine--tRNA ligase, found in Actinobacillus succinogenes (strain ATCC 55618 / DSM 22257 / CCUG 43843 / 130Z).